We begin with the raw amino-acid sequence, 101 residues long: Small ribosomal subunit protein uS10 (101 aa).

This sequence belongs to the universal ribosomal protein uS10 family. Part of the 30S ribosomal subunit.

Involved in the binding of tRNA to the ribosomes. In Mycobacterium leprae (strain Br4923), this protein is Small ribosomal subunit protein uS10.